Reading from the N-terminus, the 287-residue chain is Ferredoxin-type protein NapH (287 aa).

At 1 to 29 the chain is on the cytoplasmic side; that stretch reads MANRKRDAGREALEKKGWWRSHRWLVLRR. Residues 30 to 50 traverse the membrane as a helical segment; the sequence is LCQFFVLGMFLSGPWFGVWIL. The Periplasmic portion of the chain corresponds to 51-79; the sequence is HGNYSSSLLFDTVPLTDPLMTLQSLASGH. Residues 80-100 traverse the membrane as a helical segment; sequence LPATVALTGAVIITVLYALAG. Over 101–139 the chain is Cytoplasmic; sequence KRLFCSWVCPLNPITDLANWLRRRFDLNQSATIPRHIRY. Residues 140-160 traverse the membrane as a helical segment; it reads VLLVVILVGSALTGTLIWEWI. Residues 161–170 lie on the Periplasmic side of the membrane; sequence NPVSLMGRSL. The chain crosses the membrane as a helical span at residues 171–191; the sequence is VMGFGSGALLILALFLFDLLV. Residues 192 to 287 are Cytoplasmic-facing; that stretch reads VEHGWCGHIC…TTRWSSGAKS (96 aa). 4Fe-4S ferredoxin-type domains follow at residues 217–247 and 251–280; these read TVAA…APVL and SPVQ…ITTR. [4Fe-4S] cluster-binding residues include C226, C229, C232, C236, C260, C263, C266, and C270.

Interacts with NapC. It depends on [4Fe-4S] cluster as a cofactor.

The protein localises to the cell inner membrane. Required for electron transfer from ubiquinol, via NapC, to the periplasmic nitrate reductase NapAB complex. The sequence is that of Ferredoxin-type protein NapH (napH) from Escherichia coli (strain K12).